Here is a 214-residue protein sequence, read N- to C-terminus: Pyrrolidone-carboxylate peptidase (214 aa).

Active-site residues include Glu80, Cys143, and His166.

The protein belongs to the peptidase C15 family. As to quaternary structure, homotetramer.

The protein localises to the cytoplasm. The catalysed reaction is Release of an N-terminal pyroglutamyl group from a polypeptide, the second amino acid generally not being Pro.. Functionally, removes 5-oxoproline from various penultimate amino acid residues except L-proline. The sequence is that of Pyrrolidone-carboxylate peptidase from Klebsiella pneumoniae (strain 342).